Reading from the N-terminus, the 366-residue chain is N-methyltransferase fsqC (366 aa).

The signal sequence occupies residues 1–18 (MSSNVQDIRGWPPPFANA). The N-linked (GlcNAc...) asparagine glycan is linked to Asn-270.

This sequence belongs to the methyltransferase superfamily.

Its pathway is secondary metabolite biosynthesis. Its function is as follows. N-methyltransferase; part of the gene cluster that mediates the biosynthesis of the isoquinoline alkaloids fumisoquin A, fumisoquin B and fumisoquin C; as well as small amounts of fumipyrrole as a shunt metabolite. The products of the cluster lead to a brown coloration and are important for growth and conidiation. The nonribosomal peptide synthetase-like protein fsqF, which lacks a canonical condensation domain, is required for addition of a serine-derived dehydroalanine moiety to activated tyrosine but is not essential for the subsequent steps leading to isoquinoline formation. A different enzyme, most likely the ATP-grasp enzyme fsqD, is responsible for activation of tyrosine. Three additional enzymes encoded by the fsq cluster, the N-methyltransferase fsqC, the phenol 2-monooxygenase fsqG and the FAD-dependent oxidase fsqB, catalyze the formation of the isoquinoline ring system in the fumisoquins. FsqB converts the fspF thiolation domain-bound (2S,4S,5S)-2-amino-6-(3,4-dihydroxyphenyl)-4-hydroxy-5-(methylamino)hexanoyl into isoquinoline. The cyclization most likely proceeds via a two-step mechanism, beginning with FAD-dependent oxidation of the methyl group to an iminium species followed by electrophilic attack on the deprotonated phenol. This Aspergillus fumigatus (strain ATCC MYA-4609 / CBS 101355 / FGSC A1100 / Af293) (Neosartorya fumigata) protein is N-methyltransferase fsqC.